The primary structure comprises 168 residues: Protein-export protein SecB (168 aa).

Belongs to the SecB family. As to quaternary structure, homotetramer, a dimer of dimers. One homotetramer interacts with 1 SecA dimer.

Its subcellular location is the cytoplasm. Functionally, one of the proteins required for the normal export of preproteins out of the cell cytoplasm. It is a molecular chaperone that binds to a subset of precursor proteins, maintaining them in a translocation-competent state. It also specifically binds to its receptor SecA. This Saccharophagus degradans (strain 2-40 / ATCC 43961 / DSM 17024) protein is Protein-export protein SecB.